The sequence spans 46 residues: Photosystem II reaction center protein K (46 aa).

Residues methionine 1–alanine 9 constitute a propeptide that is removed on maturation. A helical membrane pass occupies residues leucine 25 to phenylalanine 45.

It belongs to the PsbK family. In terms of assembly, PSII is composed of 1 copy each of membrane proteins PsbA, PsbB, PsbC, PsbD, PsbE, PsbF, PsbH, PsbI, PsbJ, PsbK, PsbL, PsbM, PsbT, PsbX, PsbY, Psb30/Ycf12, peripheral proteins PsbO, CyanoQ (PsbQ), PsbU, PsbV and a large number of cofactors. It forms dimeric complexes.

Its subcellular location is the cellular thylakoid membrane. Its function is as follows. One of the components of the core complex of photosystem II (PSII). PSII is a light-driven water:plastoquinone oxidoreductase that uses light energy to abstract electrons from H(2)O, generating O(2) and a proton gradient subsequently used for ATP formation. It consists of a core antenna complex that captures photons, and an electron transfer chain that converts photonic excitation into a charge separation. The polypeptide is Photosystem II reaction center protein K (Prochlorococcus marinus (strain MIT 9515)).